The following is a 305-amino-acid chain: Succinate--CoA ligase [ADP-forming] subunit alpha (305 aa).

CoA contacts are provided by residues 17 to 20 (TGKE), K43, and 96 to 98 (ITE). Y161 is a binding site for substrate. H249 (tele-phosphohistidine intermediate) is an active-site residue.

It belongs to the succinate/malate CoA ligase alpha subunit family. Heterotetramer of two alpha and two beta subunits.

It carries out the reaction succinate + ATP + CoA = succinyl-CoA + ADP + phosphate. The enzyme catalyses GTP + succinate + CoA = succinyl-CoA + GDP + phosphate. It functions in the pathway carbohydrate metabolism; tricarboxylic acid cycle; succinate from succinyl-CoA (ligase route): step 1/1. In terms of biological role, succinyl-CoA synthetase functions in the citric acid cycle (TCA), coupling the hydrolysis of succinyl-CoA to the synthesis of either ATP or GTP and thus represents the only step of substrate-level phosphorylation in the TCA. The alpha subunit of the enzyme binds the substrates coenzyme A and phosphate, while succinate binding and nucleotide specificity is provided by the beta subunit. The sequence is that of Succinate--CoA ligase [ADP-forming] subunit alpha from Aquifex aeolicus (strain VF5).